We begin with the raw amino-acid sequence, 197 residues long: Dephospho-CoA kinase (197 aa).

The region spanning 5-197 (RLGLTGSIGM…IAHIRETADA (193 aa)) is the DPCK domain. Residue 13–18 (GMGKST) participates in ATP binding.

Belongs to the CoaE family.

Its subcellular location is the cytoplasm. It carries out the reaction 3'-dephospho-CoA + ATP = ADP + CoA + H(+). It functions in the pathway cofactor biosynthesis; coenzyme A biosynthesis; CoA from (R)-pantothenate: step 5/5. Its function is as follows. Catalyzes the phosphorylation of the 3'-hydroxyl group of dephosphocoenzyme A to form coenzyme A. The sequence is that of Dephospho-CoA kinase from Cereibacter sphaeroides (strain ATCC 17023 / DSM 158 / JCM 6121 / CCUG 31486 / LMG 2827 / NBRC 12203 / NCIMB 8253 / ATH 2.4.1.) (Rhodobacter sphaeroides).